Consider the following 219-residue polypeptide: Probable GTP-binding protein EngB (219 aa).

In terms of domain architecture, EngB-type G spans 24 to 207; it reads VQPEIAFAGR…HELIESWLRP (184 aa). GTP is bound by residues 32–39, 59–63, 81–84, 148–151, and 186–188; these read GRSNAGKS, GRTQH, DLPG, TKCD, and FSA. Residues Ser39 and Thr61 each contribute to the Mg(2+) site.

This sequence belongs to the TRAFAC class TrmE-Era-EngA-EngB-Septin-like GTPase superfamily. EngB GTPase family. Mg(2+) is required as a cofactor.

Functionally, necessary for normal cell division and for the maintenance of normal septation. The sequence is that of Probable GTP-binding protein EngB from Burkholderia cenocepacia (strain HI2424).